Reading from the N-terminus, the 362-residue chain is Adenosine deaminase (362 aa).

Positions 19 and 21 each coordinate Zn(2+). Histidine 21, aspartate 23, and glycine 181 together coordinate substrate. Residue histidine 208 participates in Zn(2+) binding. The Proton donor role is filled by glutamate 211. Aspartate 300 contributes to the Zn(2+) binding site.

It belongs to the metallo-dependent hydrolases superfamily. Adenosine and AMP deaminases family. Adenosine deaminase subfamily. Zn(2+) serves as cofactor.

The enzyme catalyses adenosine + H2O + H(+) = inosine + NH4(+). It catalyses the reaction 2'-deoxyadenosine + H2O + H(+) = 2'-deoxyinosine + NH4(+). In terms of biological role, catalyzes the hydrolytic deamination of adenosine and 2-deoxyadenosine. The polypeptide is Adenosine deaminase (Mycobacterium sp. (strain JLS)).